The following is a 249-amino-acid chain: tRNA pseudouridine synthase A (249 aa).

Catalysis depends on Asp-53, which acts as the Nucleophile. Substrate is bound at residue Tyr-111.

It belongs to the tRNA pseudouridine synthase TruA family. As to quaternary structure, homodimer.

It carries out the reaction uridine(38/39/40) in tRNA = pseudouridine(38/39/40) in tRNA. Formation of pseudouridine at positions 38, 39 and 40 in the anticodon stem and loop of transfer RNAs. The polypeptide is tRNA pseudouridine synthase A (Streptococcus pyogenes serotype M1).